A 421-amino-acid polypeptide reads, in one-letter code: Histidine--tRNA ligase (421 aa).

The protein belongs to the class-II aminoacyl-tRNA synthetase family. In terms of assembly, homodimer.

Its subcellular location is the cytoplasm. The enzyme catalyses tRNA(His) + L-histidine + ATP = L-histidyl-tRNA(His) + AMP + diphosphate + H(+). This Alkaliphilus oremlandii (strain OhILAs) (Clostridium oremlandii (strain OhILAs)) protein is Histidine--tRNA ligase.